A 256-amino-acid polypeptide reads, in one-letter code: Dihydroorotate dehydrogenase B (NAD(+)), electron transfer subunit (256 aa).

One can recognise an FAD-binding FR-type domain in the interval 2–100 (IRLETMKVVA…MGPQGNGFDL (99 aa)). FAD is bound by residues 51 to 54 (RPIS), 68 to 70 (IYR), and 75 to 76 (GT). [2Fe-2S] cluster contacts are provided by cysteine 220, cysteine 225, cysteine 228, and cysteine 243.

Belongs to the PyrK family. As to quaternary structure, heterotetramer of 2 PyrK and 2 PyrD type B subunits. The cofactor is [2Fe-2S] cluster. It depends on FAD as a cofactor.

Its pathway is pyrimidine metabolism; UMP biosynthesis via de novo pathway; orotate from (S)-dihydroorotate (NAD(+) route): step 1/1. Its function is as follows. Responsible for channeling the electrons from the oxidation of dihydroorotate from the FMN redox center in the PyrD type B subunit to the ultimate electron acceptor NAD(+). In Streptococcus pneumoniae (strain ATCC BAA-255 / R6), this protein is Dihydroorotate dehydrogenase B (NAD(+)), electron transfer subunit.